We begin with the raw amino-acid sequence, 362 residues long: 3-dehydroquinate synthase (362 aa).

NAD(+) is bound by residues 71 to 76 (DGEQYK), 105 to 109 (GVIGD), 129 to 130 (TT), Lys142, Lys151, and 169 to 172 (CLQT). Positions 184, 247, and 264 each coordinate Zn(2+).

The protein belongs to the sugar phosphate cyclases superfamily. Dehydroquinate synthase family. The cofactor is Co(2+). It depends on Zn(2+) as a cofactor. NAD(+) serves as cofactor.

It is found in the cytoplasm. The enzyme catalyses 7-phospho-2-dehydro-3-deoxy-D-arabino-heptonate = 3-dehydroquinate + phosphate. It functions in the pathway metabolic intermediate biosynthesis; chorismate biosynthesis; chorismate from D-erythrose 4-phosphate and phosphoenolpyruvate: step 2/7. Functionally, catalyzes the conversion of 3-deoxy-D-arabino-heptulosonate 7-phosphate (DAHP) to dehydroquinate (DHQ). This chain is 3-dehydroquinate synthase, found in Cronobacter sakazakii (strain ATCC BAA-894) (Enterobacter sakazakii).